Here is a 786-residue protein sequence, read N- to C-terminus: Endonuclease MutS2 (786 aa).

335–342 (GPNTGGKT) provides a ligand contact to ATP. One can recognise a Smr domain in the interval 711–786 (LDLRGERFEN…GLGVTVVELK (76 aa)).

It belongs to the DNA mismatch repair MutS family. MutS2 subfamily. Homodimer. Binds to stalled ribosomes, contacting rRNA.

Its function is as follows. Endonuclease that is involved in the suppression of homologous recombination and thus may have a key role in the control of bacterial genetic diversity. Functionally, acts as a ribosome collision sensor, splitting the ribosome into its 2 subunits. Detects stalled/collided 70S ribosomes which it binds and splits by an ATP-hydrolysis driven conformational change. Acts upstream of the ribosome quality control system (RQC), a ribosome-associated complex that mediates the extraction of incompletely synthesized nascent chains from stalled ribosomes and their subsequent degradation. Probably generates substrates for RQC. This is Endonuclease MutS2 from Bacillus cereus (strain AH820).